Reading from the N-terminus, the 131-residue chain is Aspartate 1-decarboxylase (131 aa).

The active-site Schiff-base intermediate with substrate; via pyruvic acid is Ser-25. Ser-25 is modified (pyruvic acid (Ser)). Thr-57 is a substrate binding site. Tyr-58 acts as the Proton donor in catalysis. Residue Gly-73–Ala-75 participates in substrate binding.

This sequence belongs to the PanD family. Heterooctamer of four alpha and four beta subunits. The cofactor is pyruvate. Post-translationally, is synthesized initially as an inactive proenzyme, which is activated by self-cleavage at a specific serine bond to produce a beta-subunit with a hydroxyl group at its C-terminus and an alpha-subunit with a pyruvoyl group at its N-terminus.

Its subcellular location is the cytoplasm. It catalyses the reaction L-aspartate + H(+) = beta-alanine + CO2. Its pathway is cofactor biosynthesis; (R)-pantothenate biosynthesis; beta-alanine from L-aspartate: step 1/1. Catalyzes the pyruvoyl-dependent decarboxylation of aspartate to produce beta-alanine. This Leptothrix cholodnii (strain ATCC 51168 / LMG 8142 / SP-6) (Leptothrix discophora (strain SP-6)) protein is Aspartate 1-decarboxylase.